Here is a 100-residue protein sequence, read N- to C-terminus: Small ribosomal subunit protein uS14c (100 aa).

This sequence belongs to the universal ribosomal protein uS14 family. As to quaternary structure, part of the 30S ribosomal subunit.

The protein localises to the plastid. Its subcellular location is the chloroplast. In terms of biological role, binds 16S rRNA, required for the assembly of 30S particles. The protein is Small ribosomal subunit protein uS14c of Oenothera argillicola (Appalachian evening primrose).